The sequence spans 383 residues: Micronemal protein 3 (383 aa).

The first 26 residues, 1–26 (MRGGTSALLHALTFSGAVWMCTPAEA), serve as a signal peptide directing secretion. Residues 27–66 (LPIQKSVQLGSFDKVVPSREVVSESLAPSFAVTETHSSVQ) constitute a propeptide, required for proper sorting to micronemes. The lectin-like; required for the binding of host cells stretch occupies residues 67 to 145 (SPSKQETQLC…HPDKSYGGDC (79 aa)). 3 required for proper sorting to micronemes regions span residues 146 to 189 (SCEK…SEDP), 190 to 236 (CSKR…KRTG), and 237 to 290 (CHAF…LAEK). The EGF-like domain occupies 186–227 (SEDPCSKRGNAKCGPNGTCIVVDSVSYTCTCGDGETLVNLPE). Cystine bridges form between Cys190-Cys204 and Cys198-Cys214. Asn201 is a glycosylation site (N-linked (GlcNAc...) asparagine). Positions 294 to 359 (EFGISASSCK…HTVTCEKIKH (66 aa)) are involved in dimerization.

In terms of assembly, homodimer; dimerization is likely required for host cell binding but not for trafficking to micronemes. Post-translationally, removal of the propeptide occurs in a post-medial-Golgi compartment. Removal of the propeptide is required for the host cell binding. The presence of propeptide does not affect dimerization. The presence of propeptide does not affect sorting to micronemes.

The protein localises to the cytoplasmic vesicle. The protein resides in the secretory vesicle. It is found in the microneme. It localises to the secreted. Its subcellular location is the golgi apparatus. The protein localises to the endoplasmic reticulum. Its function is as follows. Adhesin; can bind both the host cells and the parasites. May be involved in parasite invasion by acting as a bridge between the parasite and the host cell. Triggers innate immune responses in mouse macrophages via the TLR11/MyD88/NF-kappa-B pathway. Induces TNF/TNF-alpha secretion in mouse macrophages. Induces secretion of IL6 in mouse and human macrophages likely via different mechanisms. Up-regulates expression of NOS2/iNOS in mouse macrophages. Induces mouse macrophage polarization. The sequence is that of Micronemal protein 3 from Toxoplasma gondii.